The primary structure comprises 159 residues: Kojic acid related protein 6 (159 aa).

Its function is as follows. Negatively regulates mycelium growth and conidial formation and is required for stress tolerance. Plays a role in kojic acid synthesis in coordination with kojA, kojR and kojT where it acts upstream of kojA. This is Kojic acid related protein 6 from Aspergillus oryzae (strain ATCC 42149 / RIB 40) (Yellow koji mold).